Here is a 208-residue protein sequence, read N- to C-terminus: Octanoyltransferase (208 aa).

The BPL/LPL catalytic domain occupies 30 to 208 (GTASEAVFIL…ILKQEFYKIF (179 aa)). Substrate is bound by residues 69–76 (RGGKFTYH), 142–144 (SIG), and 155–157 (GVA). Catalysis depends on cysteine 173, which acts as the Acyl-thioester intermediate.

This sequence belongs to the LipB family.

Its subcellular location is the cytoplasm. It catalyses the reaction octanoyl-[ACP] + L-lysyl-[protein] = N(6)-octanoyl-L-lysyl-[protein] + holo-[ACP] + H(+). It functions in the pathway protein modification; protein lipoylation via endogenous pathway; protein N(6)-(lipoyl)lysine from octanoyl-[acyl-carrier-protein]: step 1/2. Its function is as follows. Catalyzes the transfer of endogenously produced octanoic acid from octanoyl-acyl-carrier-protein onto the lipoyl domains of lipoate-dependent enzymes. Lipoyl-ACP can also act as a substrate although octanoyl-ACP is likely to be the physiological substrate. This Orientia tsutsugamushi (strain Ikeda) (Rickettsia tsutsugamushi) protein is Octanoyltransferase.